We begin with the raw amino-acid sequence, 176 residues long: ATP-dependent protease subunit HslV (176 aa).

Threonine 2 is an active-site residue. Residues glycine 157, cysteine 160, and threonine 163 each coordinate Na(+).

Belongs to the peptidase T1B family. HslV subfamily. As to quaternary structure, a double ring-shaped homohexamer of HslV is capped on each side by a ring-shaped HslU homohexamer. The assembly of the HslU/HslV complex is dependent on binding of ATP.

The protein localises to the cytoplasm. The enzyme catalyses ATP-dependent cleavage of peptide bonds with broad specificity.. Allosterically activated by HslU binding. Functionally, protease subunit of a proteasome-like degradation complex believed to be a general protein degrading machinery. This chain is ATP-dependent protease subunit HslV, found in Escherichia coli O45:K1 (strain S88 / ExPEC).